We begin with the raw amino-acid sequence, 254 residues long: Nickel import ATP-binding protein NikD (254 aa).

The ABC transporter domain occupies 2–241; the sequence is PQQIELRNIA…PKHTVTRSLV (240 aa). Residue 36–43 coordinates ATP; sequence GGSGSGKS.

It belongs to the ABC transporter superfamily. Nickel importer (TC 3.A.1.5.3) family. The complex is composed of two ATP-binding proteins (NikD and NikE), two transmembrane proteins (NikB and NikC) and a solute-binding protein (NikA).

The protein resides in the cell inner membrane. The enzyme catalyses Ni(2+)(out) + ATP + H2O = Ni(2+)(in) + ADP + phosphate + H(+). In terms of biological role, part of the ABC transporter complex NikABCDE involved in nickel import. Responsible for energy coupling to the transport system. The polypeptide is Nickel import ATP-binding protein NikD (Shigella flexneri serotype 5b (strain 8401)).